Reading from the N-terminus, the 205-residue chain is Proteasome subunit beta type-3 (205 aa).

S2 is modified (N-acetylserine). At K77 the chain carries N6-acetyllysine.

It belongs to the peptidase T1B family. As to quaternary structure, the 26S proteasome consists of a 20S proteasome core and two 19S regulatory subunits. The 20S proteasome core is a barrel-shaped complex made of 28 subunits that are arranged in four stacked rings. The two outer rings are each formed by seven alpha subunits, and the two inner rings are formed by seven beta subunits. The proteolytic activity is exerted by three beta-subunits PSMB5, PSMB6 and PSMB7.

Its subcellular location is the cytoplasm. It localises to the nucleus. In terms of biological role, non-catalytic component of the 20S core proteasome complex involved in the proteolytic degradation of most intracellular proteins. This complex plays numerous essential roles within the cell by associating with different regulatory particles. Associated with two 19S regulatory particles, forms the 26S proteasome and thus participates in the ATP-dependent degradation of ubiquitinated proteins. The 26S proteasome plays a key role in the maintenance of protein homeostasis by removing misfolded or damaged proteins that could impair cellular functions, and by removing proteins whose functions are no longer required. Associated with the PA200 or PA28, the 20S proteasome mediates ubiquitin-independent protein degradation. This type of proteolysis is required in several pathways including spermatogenesis (20S-PA200 complex) or generation of a subset of MHC class I-presented antigenic peptides (20S-PA28 complex). The protein is Proteasome subunit beta type-3 (PSMB3) of Bos taurus (Bovine).